Reading from the N-terminus, the 1854-residue chain is PKS-NRPS hybrid synthetase ATPKS (1854 aa).

The interval 24–423 (FDQTQTRYSP…GRADTQIKIR (400 aa)) is adenylation (A) domain. The 76-residue stretch at 523 to 598 (IPASTLTQQL…NLAAYLSDQT (76 aa)) folds into the Carrier 1 domain. Ser558 is subject to O-(pantetheine 4'-phosphoryl)serine. The Ketosynthase family 3 (KS3) domain maps to 617–1049 (GEDIAVISMA…GTNAHAIIEE (433 aa)). Active-site for beta-ketoacyl synthase activity residues include Cys791, His926, and His967. The segment at 1162-1496 (LFSGQGTERA…SLSDLHIRKV (335 aa)) is malonyl-CoA:ACP transacylase (MAT) domain. A disordered region spans residues 1536-1556 (KSSGQPSGQSPSGCPQPTGQI). The span at 1537-1555 (SSGQPSGQSPSGCPQPTGQ) shows a compositional bias: low complexity. Positions 1776–1851 (MMLQGLVRGI…SLSDALQKQV (76 aa)) constitute a Carrier 2 domain. O-(pantetheine 4'-phosphoryl)serine is present on Ser1811.

In the C-terminal section; belongs to the NRP synthetase family.

The protein operates within secondary metabolite biosynthesis. Its function is as follows. PKS-NRPS hybrid synthetase; part of the gene cluster that mediates the biosynthesis of pyrophen and campyrone B, which represent a class of fungal amino acid-derived alpha-pyrone natural products. The first step of pyrophen biosynthesis is catalyzed by the PKS-NRPS hybrid synthetase ATPKS that uptakes and condensates L-phenylalanine and malonyl-CoA in order to produce desmethyldesacetylpyrophen. Although the A domain does not discriminate between 2 enantiomeric phenylalanines, the downstream KS domain must play a gate keeping role to stereoselectively accept the L-phenylalanyl-S-phosphopantetheine (Ppant)-T domain intermediate for chain elongation. The resulting amino acid derived diketide is off-loaded through lactonization to yield the alpha-pyrone intermediate desmethyldesacetylpyrophen. The cluster-specific O-methyltransferase (OMT) then methylates desmethyldesacetylpyrophen to desacetylpyrophen, which is further acetylated to pyrophen by an endogenous yet unidentified N-acetyltransferase. ATPKS has relaxed substrate specificity to activate and extend branched-chain amino acid L-leucine to produce small amounts of campyrone B. The sequence is that of PKS-NRPS hybrid synthetase ATPKS from Aspergillus niger (strain ATCC 1015 / CBS 113.46 / FGSC A1144 / LSHB Ac4 / NCTC 3858a / NRRL 328 / USDA 3528.7).